The chain runs to 150 residues: Deoxyuridine 5'-triphosphate nucleotidohydrolase (150 aa).

Residues 69–71 (RSG), asparagine 82, 86–88 (LID), and methionine 96 contribute to the substrate site.

It belongs to the dUTPase family. Mg(2+) serves as cofactor.

The catalysed reaction is dUTP + H2O = dUMP + diphosphate + H(+). It functions in the pathway pyrimidine metabolism; dUMP biosynthesis; dUMP from dCTP (dUTP route): step 2/2. Its function is as follows. This enzyme is involved in nucleotide metabolism: it produces dUMP, the immediate precursor of thymidine nucleotides and it decreases the intracellular concentration of dUTP so that uracil cannot be incorporated into DNA. The polypeptide is Deoxyuridine 5'-triphosphate nucleotidohydrolase (Acinetobacter baylyi (strain ATCC 33305 / BD413 / ADP1)).